Here is a 120-residue protein sequence, read N- to C-terminus: ATP synthase subunit a (120 aa).

A run of 4 helical transmembrane segments spans residues Phe-2 to Leu-22, Phe-29 to Val-49, Leu-59 to Tyr-79, and Ile-94 to Gly-116.

This sequence belongs to the ATPase A chain family. As to quaternary structure, F-type ATPases have 2 components, CF(1) - the catalytic core - and CF(0) - the membrane proton channel. CF(1) has five subunits: alpha(3), beta(3), gamma(1), delta(1), epsilon(1). CF(0) has three main subunits: a, b and c.

It is found in the mitochondrion inner membrane. In terms of biological role, mitochondrial membrane ATP synthase (F(1)F(0) ATP synthase or Complex V) produces ATP from ADP in the presence of a proton gradient across the membrane which is generated by electron transport complexes of the respiratory chain. F-type ATPases consist of two structural domains, F(1) - containing the extramembraneous catalytic core and F(0) - containing the membrane proton channel, linked together by a central stalk and a peripheral stalk. During catalysis, ATP synthesis in the catalytic domain of F(1) is coupled via a rotary mechanism of the central stalk subunits to proton translocation. Key component of the proton channel; it may play a direct role in the translocation of protons across the membrane. This Naegleria fowleri (Brain eating amoeba) protein is ATP synthase subunit a (ATP6).